The following is a 139-amino-acid chain: Putative nickel-responsive regulator (139 aa).

H79, H90, H92, and C98 together coordinate Ni(2+).

Belongs to the transcriptional regulatory CopG/NikR family. Ni(2+) is required as a cofactor.

In terms of biological role, transcriptional regulator. The protein is Putative nickel-responsive regulator of Anaeromyxobacter dehalogenans (strain 2CP-1 / ATCC BAA-258).